We begin with the raw amino-acid sequence, 180 residues long: ATP synthase subunit delta, chloroplastic (180 aa).

Belongs to the ATPase delta chain family. As to quaternary structure, F-type ATPases have 2 components, F(1) - the catalytic core - and F(0) - the membrane proton channel. F(1) has five subunits: alpha(3), beta(3), gamma(1), delta(1), epsilon(1). CF(0) has four main subunits: a(1), b(1), b'(1) and c(10-14). The alpha and beta chains form an alternating ring which encloses part of the gamma chain. F(1) is attached to F(0) by a central stalk formed by the gamma and epsilon chains, while a peripheral stalk is formed by the delta, b and b' chains.

It localises to the plastid. The protein resides in the chloroplast thylakoid membrane. In terms of biological role, f(1)F(0) ATP synthase produces ATP from ADP in the presence of a proton or sodium gradient. F-type ATPases consist of two structural domains, F(1) containing the extramembraneous catalytic core and F(0) containing the membrane proton channel, linked together by a central stalk and a peripheral stalk. During catalysis, ATP synthesis in the catalytic domain of F(1) is coupled via a rotary mechanism of the central stalk subunits to proton translocation. Functionally, this protein is part of the stalk that links CF(0) to CF(1). It either transmits conformational changes from CF(0) to CF(1) or is implicated in proton conduction. This Emiliania huxleyi (Coccolithophore) protein is ATP synthase subunit delta, chloroplastic.